Consider the following 167-residue polypeptide: NADH-ubiquinone oxidoreductase chain 4 (167 aa).

3 helical membrane passes run 2 to 22 (FIGA…LFCL), 44 to 64 (LLPL…ALPP), and 86 to 106 (IILV…MLIM).

It belongs to the complex I subunit 4 family.

It is found in the mitochondrion membrane. The enzyme catalyses a ubiquinone + NADH + 5 H(+)(in) = a ubiquinol + NAD(+) + 4 H(+)(out). Core subunit of the mitochondrial membrane respiratory chain NADH dehydrogenase (Complex I) that is believed to belong to the minimal assembly required for catalysis. Complex I functions in the transfer of electrons from NADH to the respiratory chain. The immediate electron acceptor for the enzyme is believed to be ubiquinone. The chain is NADH-ubiquinone oxidoreductase chain 4 (MT-ND4) from Carlito syrichta (Philippine tarsier).